A 367-amino-acid chain; its full sequence is MSDSQTLVVKLGTSVLTGGSRRLNRAHIVELVRQCAQLHAAGHRIVIVTSGAIAAGREHLGYPELPATIASKQLLAAVGQSRLIQLWEQLFSIYGIHVGQMLLTRADMEDRERFLNARDTLRALLDNNIVPVINENDAVATAEIKVGDNDNLSALAAILAGADKLLLLTDQKGLYTADPRSNPQAELIKDVYGIDDALRAIAGDSVSGLGTGGMSTKLQAADVACRAGIDTIIAAGSKPGVIGDVMEGISVGTLFHAQATPLENRKRWIFGAPPAGEITVDEGATAAILERGSSLLPKGIKSVTGNFSRGEVIRICNLEGRDIAHGVSRYNSDALRRIAGHHSQEIDAILGYEYGPVAVHRDDMITR.

Residue lysine 10 coordinates ATP. Positions 50, 137, and 149 each coordinate substrate. ATP is bound by residues 169 to 170 (TD) and 211 to 217 (TGGMSTK). A PUA domain is found at 275-353 (AGEITVDEGA…QEIDAILGYE (79 aa)).

The protein belongs to the glutamate 5-kinase family.

The protein resides in the cytoplasm. The catalysed reaction is L-glutamate + ATP = L-glutamyl 5-phosphate + ADP. Its pathway is amino-acid biosynthesis; L-proline biosynthesis; L-glutamate 5-semialdehyde from L-glutamate: step 1/2. In terms of biological role, catalyzes the transfer of a phosphate group to glutamate to form L-glutamate 5-phosphate. The protein is Glutamate 5-kinase of Escherichia coli O81 (strain ED1a).